The primary structure comprises 277 residues: Large ribosomal subunit protein uL2 (277 aa).

The interval T219 to K277 is disordered.

Belongs to the universal ribosomal protein uL2 family. Part of the 50S ribosomal subunit. Forms a bridge to the 30S subunit in the 70S ribosome.

One of the primary rRNA binding proteins. Required for association of the 30S and 50S subunits to form the 70S ribosome, for tRNA binding and peptide bond formation. It has been suggested to have peptidyltransferase activity; this is somewhat controversial. Makes several contacts with the 16S rRNA in the 70S ribosome. The protein is Large ribosomal subunit protein uL2 of Clostridium botulinum (strain 657 / Type Ba4).